The primary structure comprises 284 residues: UPF0294 protein VV1_1880 (284 aa).

It belongs to the UPF0294 family.

The protein localises to the cytoplasm. The protein is UPF0294 protein VV1_1880 of Vibrio vulnificus (strain CMCP6).